Consider the following 650-residue polypeptide: Acetyl-coenzyme A synthetase (650 aa).

CoA contacts are provided by residues arginine 191–arginine 194, threonine 311, and asparagine 335. Residues glycine 387–proline 389, aspartate 411–threonine 416, aspartate 501, and arginine 516 each bind ATP. Serine 524 contributes to the CoA binding site. Arginine 527 serves as a coordination point for ATP. Residues valine 538, histidine 540, and isoleucine 543 each coordinate Mg(2+). Arginine 585 is a CoA binding site. Lysine 610 is subject to N6-acetyllysine.

It belongs to the ATP-dependent AMP-binding enzyme family. The cofactor is Mg(2+). Post-translationally, acetylated. Deacetylation by the SIR2-homolog deacetylase activates the enzyme.

It carries out the reaction acetate + ATP + CoA = acetyl-CoA + AMP + diphosphate. In terms of biological role, catalyzes the conversion of acetate into acetyl-CoA (AcCoA), an essential intermediate at the junction of anabolic and catabolic pathways. AcsA undergoes a two-step reaction. In the first half reaction, AcsA combines acetate with ATP to form acetyl-adenylate (AcAMP) intermediate. In the second half reaction, it can then transfer the acetyl group from AcAMP to the sulfhydryl group of CoA, forming the product AcCoA. In Vibrio parahaemolyticus serotype O3:K6 (strain RIMD 2210633), this protein is Acetyl-coenzyme A synthetase.